Reading from the N-terminus, the 128-residue chain is LIM domain-containing protein 2 (128 aa).

The residue at position 1 (Met-1) is an N-acetylmethionine. Residues 1 to 25 form a disordered region; that stretch reads MFQAAGAAQATPSHEAKGSSGSSTV. The 61-residue stretch at 39 to 99 folds into the LIM zinc-binding domain; that stretch reads ETCAACQKTV…RPHFQQLFKS (61 aa). Positions 41, 44, 62, 65, 68, 71, 89, and 92 each coordinate Zn(2+).

As to quaternary structure, interacts with ILK.

It is found in the cytoplasm. It localises to the nucleus. Acts as an activator of the protein-kinase ILK, thereby regulating cell motility. The chain is LIM domain-containing protein 2 from Mus musculus (Mouse).